The primary structure comprises 229 residues: Enolase-phosphatase E1 (229 aa).

The protein belongs to the HAD-like hydrolase superfamily. MasA/MtnC family. As to quaternary structure, monomer. Requires Mg(2+) as cofactor.

The catalysed reaction is 5-methylsulfanyl-2,3-dioxopentyl phosphate + H2O = 1,2-dihydroxy-5-(methylsulfanyl)pent-1-en-3-one + phosphate. Its pathway is amino-acid biosynthesis; L-methionine biosynthesis via salvage pathway; L-methionine from S-methyl-5-thio-alpha-D-ribose 1-phosphate: step 3/6. It functions in the pathway amino-acid biosynthesis; L-methionine biosynthesis via salvage pathway; L-methionine from S-methyl-5-thio-alpha-D-ribose 1-phosphate: step 4/6. Bifunctional enzyme that catalyzes the enolization of 2,3-diketo-5-methylthiopentyl-1-phosphate (DK-MTP-1-P) into the intermediate 2-hydroxy-3-keto-5-methylthiopentenyl-1-phosphate (HK-MTPenyl-1-P), which is then dephosphorylated to form the acireductone 1,2-dihydroxy-3-keto-5-methylthiopentene (DHK-MTPene). The polypeptide is Enolase-phosphatase E1 (Enterobacter sp. (strain 638)).